Reading from the N-terminus, the 432-residue chain is MPNVVVVGAQWGDEGKGKIVDLLTQYADVVVRFQGGNNAGHTLVVGGEKTVLHLIPSGILHPGKSCVIGNGVVIDPEVLVLEIDRLKAKGALKDDGQLVVSLDAHVIMPWHKAIDVAREQAMGEGKIGTTGRGIGPTYEDKVARRGLRIRDLLDEARLARKVKERAALAREELARLGAKLELDEPALVKRYAELGRRVAGYATDVSIWLHRALQQGKSLLFEGAQGTMLDVDHGTYPFVTSSNTVAGNAVVGCGLGPTAVDYVLGISKAYSTRVGGGPYPTELKDETGERLRKLGGEYGATTGRPRRTGWLDALALRYAVRVNGLSGIAMTKLDVLTGFDTVKIAVGYRLDGKVLDEMPSDPEVIERCTPVYEELPGWTEKLEHLRTWDDLPPRARAYVKRVEELAGVKVVGCSVGADRGETILVENPFLAR.

Residues 12–18 and 40–42 each bind GTP; these read GDEGKGK and GHT. Asp-13 acts as the Proton acceptor in catalysis. The Mg(2+) site is built by Asp-13 and Gly-40. Residues 13–16, 38–41, Thr-130, Arg-144, Gln-225, Thr-240, and Arg-304 contribute to the IMP site; these read DEGK and NAGH. The active-site Proton donor is the His-41. 300 to 306 provides a ligand contact to substrate; sequence ATTGRPR. Residues Arg-306, 332-334, and 414-416 contribute to the GTP site; these read KLD and SVG.

The protein belongs to the adenylosuccinate synthetase family. In terms of assembly, homodimer. Requires Mg(2+) as cofactor.

The protein resides in the cytoplasm. The enzyme catalyses IMP + L-aspartate + GTP = N(6)-(1,2-dicarboxyethyl)-AMP + GDP + phosphate + 2 H(+). Its pathway is purine metabolism; AMP biosynthesis via de novo pathway; AMP from IMP: step 1/2. Plays an important role in the de novo pathway of purine nucleotide biosynthesis. Catalyzes the first committed step in the biosynthesis of AMP from IMP. The polypeptide is Adenylosuccinate synthetase (Anaeromyxobacter dehalogenans (strain 2CP-1 / ATCC BAA-258)).